Consider the following 359-residue polypeptide: DNA polymerase IV (359 aa).

Residues 4–185 (IIHIDMDCYF…LSLRKIPGVG (182 aa)) enclose the UmuC domain. Residues D8 and D103 each contribute to the Mg(2+) site. E104 is a catalytic residue.

It belongs to the DNA polymerase type-Y family. In terms of assembly, monomer. Mg(2+) is required as a cofactor.

The protein localises to the cytoplasm. The enzyme catalyses DNA(n) + a 2'-deoxyribonucleoside 5'-triphosphate = DNA(n+1) + diphosphate. Poorly processive, error-prone DNA polymerase involved in untargeted mutagenesis. Copies undamaged DNA at stalled replication forks, which arise in vivo from mismatched or misaligned primer ends. These misaligned primers can be extended by PolIV. Exhibits no 3'-5' exonuclease (proofreading) activity. May be involved in translesional synthesis, in conjunction with the beta clamp from PolIII. The protein is DNA polymerase IV of Shewanella sp. (strain ANA-3).